We begin with the raw amino-acid sequence, 1801 residues long: MSDDIRKRFEFPNSLIQSQAVGHLIAAVLKENGFSEKIHQSTNQTPALNLLWEKCCSDNVVVRTACCEGLVALVAQDHAEFSYVLNGILNLIPSTRNTHGLIKAIMHLLQMQALKEGQGGEKNIQSIYTIRNHPHPLITVLEHRPDCWPVFLQQLTAFFQQCPERLEVSCIQIMAPFLWYLYCEPSQLQEYAKLRLALLKVLLQPQVLCDKDQPSILEQQILQLCCDIVPCLQVKDLIQTTEAMMFIEEVCLSLLRHPVFWKIQLTQMSLQLLCVSEVSLKITGECSSSIHLLEHSVELLKEDFPVELVIIGIALLLLQTPASQQKPILNLALKLLSVTEDQKIPKSSLLLVMPILQILSSTALEDCISVDEEGPSRQQLALNLLEMIQQECYRDDHQKLSYKLVCPVTSMYGTIFTAWRILEVMTDSSAASDWLASVESLLPITAVIPAPAFLLLAHLLVEDKGQNLHQILKVTTELAQADSSQVPNLIPVLMFKLGRPLEPILYNDILYTLPKLGVHKVCIGQILRIIQLLGTTPRLRAVTLRLLTSLWEKQDRVYPELQRFMAVSDVPSLSVGKEVQWEKLIAKAASIRDICKQRPYQHGADMLAAISQVLNECTKPDQATPAALVLQGLHALCQAEVVCIRSTWNALSPKLSCDTRPLILKTLSELFSLVPSLTVNTTEYENFKVQVLSFLWTHTQNKDPIVANAAYRSLANFSAGEHTILHLPEKIRPEIPIPEELDDDEDVEDVDLSVPGSCYLKLLSLTPPLVLPALEEFFTSLVKQEMVNMPRGIYHSALKGGARSDQGKTVAGIPNFILKMYETNKQPGLKPGLAGGMLFCYDVSMYQSKDGKPLNRLMASRGRSFKQTSLALVHEVHIQLSEWHRAIFLPQAWLAYMNRAYHAILQGRLGELELQLKHGKEEPEEVQYKKSTAWLWVRDMLTDEITKAAAKESPVVKGNALLALSSLAVVVSRHEASLSSDSDGLLEVQPNFLSMKEWVSMVLDTLLVIVDSHYQPRGQLLSWFYYKSYSGENTASAIARSAAATALSLLVPVFIISCKEKVEEILNMLTARLPGKPSADESQAVQIHMGLALGMFLSRLCEEKLSDISGQEMNLLLMKSLDALENCCFDTSLEYNTGCILGVGLVLSLMSHSSQMQSRVHVAALLRKLSAHVDDSGSQSRTFQEVLAYTLSCVCTSAFSAGIIEATEAEDVMNKLRLLVENSQQTSGFALALGNIVHGLSVCGHGKAEDLGSKLLPAWIRIVLTEGTPTMLCLAALHGMVALVGSEGDVMQLKSEAIQTSHFQGRLNEVIRTLTQVISVSGVIGLQSNAVWLLGHLHLSTLSSSQSRASVPTDYSYLPESSFIGAAIGFFITGGKKGPESVPPSLLKVVMKPIATVGESYQYPPVNWAALLSPLMRLNFGEEIQQLCLEIMVTQAQSSQNAAALLGLWVTPPLIHSLSLNTKRYLLISAPLWIKHISDEQILGFVENLMVAVFKAASPLGSPELCPSALHGLSQAMKLPSPAHHLWSLLSEATGKIFDLLPNKIRRKDLELYISIAKCLLEMTDDDANRIAQVTKSNIEKAAFVKLYLVSQGRFPLVNLTDMLSVAVQHREKEVLAWMILHSLYQARIVSHANTGVLKRMEWLLELMGYIRNVAYQSTSFHNTALDKALDFFLLIFATAVVAWADHTAPLLLGLSASWLPWHQENGPAGPVPSFLGRSPMHRVTLQEVLTLLPNSMALLLQKEPWKEQTQKFIDWLFSIMESPKEALSAQSRDLLKATLLSLRVLPEFKKKAVWTRAYGW.

Lys-819 carries the N6-acetyllysine modification.

In terms of assembly, interacts with VCL. As to expression, ubiquitous. High expression in brain followed by testis, muscle, pancreas, heart, ovary, small intestine, placenta, prostate, thymus, kidney, colon, liver, lung, spleen and leukocytes. Expression is reduced in most glioblastomas and all glioblastoma cell lines.

The protein resides in the cell junction. The protein localises to the focal adhesion. Its subcellular location is the cytoplasm. It localises to the cytosol. Functionally, required for the maintenance of SKIC2 and SKIC3 proteostatic levels in the liver. May be involved in the regulation of RNA degradation by the exosome complex. Potential tumor suppressor in gliomas. The protein is Focadhesin of Homo sapiens (Human).